A 161-amino-acid polypeptide reads, in one-letter code: Endoribonuclease YbeY (161 aa).

His-127, His-131, and His-137 together coordinate Zn(2+).

The protein belongs to the endoribonuclease YbeY family. Zn(2+) serves as cofactor.

It is found in the cytoplasm. Single strand-specific metallo-endoribonuclease involved in late-stage 70S ribosome quality control and in maturation of the 3' terminus of the 16S rRNA. In Listeria monocytogenes serotype 4b (strain CLIP80459), this protein is Endoribonuclease YbeY.